Consider the following 202-residue polypeptide: MSRYRGPRLRIVRRLGDLPGLTRKSARRAYPPGQHGQNRKKRSEYAIRLEEKQKLRLNYGLTEKQLLRYVRRARRVTGSTGQVLLQLLEMRLDNTVFRLGMAPTIPAARQLVNHGHVTVNGRVVNIASYQCRPGEEIAVRDKAPSRKLVENNLQYPGLANLPSHLEFDKNKLVGKVNSVIEREWVALQVNELLVVEYYSRQA.

The interval 22–43 is disordered; sequence TRKSARRAYPPGQHGQNRKKRS. Positions 90-152 constitute an S4 RNA-binding domain; it reads MRLDNTVFRL…APSRKLVENN (63 aa).

Belongs to the universal ribosomal protein uS4 family. In terms of assembly, part of the 30S ribosomal subunit. Contacts protein S5. The interaction surface between S4 and S5 is involved in control of translational fidelity.

Functionally, one of the primary rRNA binding proteins, it binds directly to 16S rRNA where it nucleates assembly of the body of the 30S subunit. In terms of biological role, with S5 and S12 plays an important role in translational accuracy. In Nostoc sp. (strain PCC 7120 / SAG 25.82 / UTEX 2576), this protein is Small ribosomal subunit protein uS4.